Reading from the N-terminus, the 551-residue chain is MSNYAPFIKPYVEYNEHGWGPCEVPELDVPYQPFCKSDRLGKICDWTAMVPEKKFPSKYASTFGNNSQYAYFYEDDDSTFHLVDTTGSKATKPYQRGRYRPNMRNNVRSRGRTGRGTPNIASLGGSTAGGATASTTKYGKGRNTRNTQNMGRRFGRNAPTRIRESSVMVQSDWVSIEEIDFPRLLKLALPNIKDGKDIATCGWLEFYDKLYDRVNLRNEKPLQKMDRVVHTVTTTDDPVIRRLSRTMGNVFATDEILSTIMCCTRSNYSWDVVVEKLGTKVFLDKRYNDQFDLLTVNETSVEPPMDEEGSINSAHSLAMEATLINHNFSQQVLRIGDQEPRFMFEEPNPFEEPGVDLASIGYRYRQWDLGNDVVLIARCKHNGVIQGPNGDVQFLSIKALNEWDSKVTNSVEWRQKLDTQRGAVLASELRNNACKLARWTVEAVLAGSDQLKLGYVSRMNPRDHLRHVILGTQQFKPQEFATQINLNMDNAWGVLRCLIDLVMRQPDGKYLIMKDPNKPMIRLYDVPENAFDSDGDEEEESSDPLSNSNDN.

Residues 91-154 form a disordered region; it reads TKPYQRGRYR…RNTQNMGRRF (64 aa). Residues 95–113 are compositionally biased toward basic residues; the sequence is QRGRYRPNMRNNVRSRGRT. Positions 121–136 are enriched in low complexity; the sequence is ASLGGSTAGGATASTT. The segment at 290 to 304 is RNA gate; sequence QFDLLTVNETSVEPP. A disordered region spans residues 527 to 551; the sequence is PENAFDSDGDEEEESSDPLSNSNDN. The segment covering 531 to 542 has biased composition (acidic residues); that stretch reads FDSDGDEEEESS.

The protein belongs to the eIF-3 subunit D family. As to quaternary structure, component of the eukaryotic translation initiation factor 3 (eIF-3) complex. The eIF-3 complex interacts with pix.

It localises to the cytoplasm. MRNA cap-binding component of the eukaryotic translation initiation factor 3 (eIF-3) complex, which is involved in protein synthesis of a specialized repertoire of mRNAs and, together with other initiation factors, stimulates binding of mRNA and methionyl-tRNAi to the 40S ribosome. The eIF-3 complex specifically targets and initiates translation of a subset of mRNAs involved in cell proliferation. In the eIF-3 complex, eif3d specifically recognizes and binds the 7-methylguanosine cap of a subset of mRNAs. This chain is Eukaryotic translation initiation factor 3 subunit D-2, found in Drosophila melanogaster (Fruit fly).